An 80-amino-acid polypeptide reads, in one-letter code: Translation initiation factor IF-1 (80 aa).

Residues Glu6–Arg80 enclose the S1-like domain.

It belongs to the IF-1 family. Component of the 30S ribosomal translation pre-initiation complex which assembles on the 30S ribosome in the order IF-2 and IF-3, IF-1 and N-formylmethionyl-tRNA(fMet); mRNA recruitment can occur at any time during PIC assembly.

The protein resides in the cytoplasm. Its function is as follows. One of the essential components for the initiation of protein synthesis. Stabilizes the binding of IF-2 and IF-3 on the 30S subunit to which N-formylmethionyl-tRNA(fMet) subsequently binds. Helps modulate mRNA selection, yielding the 30S pre-initiation complex (PIC). Upon addition of the 50S ribosomal subunit IF-1, IF-2 and IF-3 are released leaving the mature 70S translation initiation complex. This Deinococcus radiodurans (strain ATCC 13939 / DSM 20539 / JCM 16871 / CCUG 27074 / LMG 4051 / NBRC 15346 / NCIMB 9279 / VKM B-1422 / R1) protein is Translation initiation factor IF-1.